An 87-amino-acid chain; its full sequence is MQLLRCFSIFSVIASVLAQELTTICEQIPSPTLESTPYSLSTTTILANGKAMQGVFEYYKSVTFVSNCGSHPSTTSKGSPINTQYVF.

Residues 1–18 (MQLLRCFSIFSVIASVLA) form the signal peptide. Residue Thr-22 is glycosylated (O-linked (Man...) threonine). Ser-30 carries O-linked (Man...) serine glycosylation. A glycan (O-linked (Man...) threonine) is linked at Thr-32. Residue Ser-39 is glycosylated (O-linked (Man...) serine). Residue Thr-63 is glycosylated (O-linked (Man...) threonine). An O-linked (Man...) serine glycan is attached at Ser-66. A glycan (O-linked (Man...) threonine) is linked at Thr-75.

Heterodimer; disulfide-linked. Interacts with SAG1.

Receptor binding subunit of the a-agglutinin heterodimer. S.cerevisiae a and alpha cells express the complementary cell surface glycoproteins a-agglutinin and alpha-agglutinin, respectively, which interact with one another to promote cellular aggregation during mating. This is A-agglutinin-binding subunit (AGA2) from Saccharomyces cerevisiae (strain ATCC 204508 / S288c) (Baker's yeast).